Consider the following 239-residue polypeptide: Ribonuclease PH (239 aa).

Phosphate is bound by residues Arg86 and 124-126; that span reads GTR.

The protein belongs to the RNase PH family. Homohexameric ring arranged as a trimer of dimers.

The enzyme catalyses tRNA(n+1) + phosphate = tRNA(n) + a ribonucleoside 5'-diphosphate. Functionally, phosphorolytic 3'-5' exoribonuclease that plays an important role in tRNA 3'-end maturation. Removes nucleotide residues following the 3'-CCA terminus of tRNAs; can also add nucleotides to the ends of RNA molecules by using nucleoside diphosphates as substrates, but this may not be physiologically important. Probably plays a role in initiation of 16S rRNA degradation (leading to ribosome degradation) during starvation. This chain is Ribonuclease PH, found in Sodalis glossinidius (strain morsitans).